A 445-amino-acid polypeptide reads, in one-letter code: Phosphoglucosamine mutase (445 aa).

The active-site Phosphoserine intermediate is the serine 102. Residues serine 102, aspartate 241, aspartate 243, and aspartate 245 each contribute to the Mg(2+) site. Serine 102 is modified (phosphoserine).

This sequence belongs to the phosphohexose mutase family. Mg(2+) serves as cofactor. In terms of processing, activated by phosphorylation.

The catalysed reaction is alpha-D-glucosamine 1-phosphate = D-glucosamine 6-phosphate. Functionally, catalyzes the conversion of glucosamine-6-phosphate to glucosamine-1-phosphate. The chain is Phosphoglucosamine mutase from Salmonella choleraesuis (strain SC-B67).